We begin with the raw amino-acid sequence, 252 residues long: MPTLSEYKALLAADEVAPAILAALKEDSRIGAGKLLAAYQRRQAHQAAEEVALRYRSRYERQLWGTYEYVAGLDEVGRGPLAGPVVTAAVILPHHFQWPVNDSKQLTAHERNVLYPHILTEAIAVGIGVADNRTIDRENIYHATELAMAQAVDHLRVAPECLLVDAMHVPVDLPQKRLIKGDANSISIAAASIVAKVIRDRLMMMYDKIYPGYDFKDNMGYGTKAHLAGLAAHGVTPIHRRSFGPVRDRLRS.

The 185-residue stretch at 68–252 (EYVAGLDEVG…FGPVRDRLRS (185 aa)) folds into the RNase H type-2 domain. Residues aspartate 74, glutamate 75, and aspartate 165 each contribute to the a divalent metal cation site.

This sequence belongs to the RNase HII family. Requires Mn(2+) as cofactor. It depends on Mg(2+) as a cofactor.

It localises to the cytoplasm. It catalyses the reaction Endonucleolytic cleavage to 5'-phosphomonoester.. Functionally, endonuclease that specifically degrades the RNA of RNA-DNA hybrids. The chain is Ribonuclease HII from Lacticaseibacillus paracasei (strain ATCC 334 / BCRC 17002 / CCUG 31169 / CIP 107868 / KCTC 3260 / NRRL B-441) (Lactobacillus paracasei).